The following is a 366-amino-acid chain: Ribosomal RNA large subunit methyltransferase M (366 aa).

S-adenosyl-L-methionine is bound by residues serine 188, 221 to 224, aspartate 240, aspartate 260, and aspartate 277; that span reads CPGG. The Proton acceptor role is filled by lysine 306.

Belongs to the class I-like SAM-binding methyltransferase superfamily. RNA methyltransferase RlmE family. RlmM subfamily. Monomer.

It localises to the cytoplasm. The catalysed reaction is cytidine(2498) in 23S rRNA + S-adenosyl-L-methionine = 2'-O-methylcytidine(2498) in 23S rRNA + S-adenosyl-L-homocysteine + H(+). Catalyzes the 2'-O-methylation at nucleotide C2498 in 23S rRNA. This is Ribosomal RNA large subunit methyltransferase M from Salmonella arizonae (strain ATCC BAA-731 / CDC346-86 / RSK2980).